Reading from the N-terminus, the 310-residue chain is Cytosolic Fe-S cluster assembly factor Nubp1 homolog (310 aa).

4 residues coordinate [4Fe-4S] cluster: cysteine 8, cysteine 22, cysteine 25, and cysteine 31. Residue 62–69 (GKGGVGKS) coordinates ATP. Positions 239 and 242 each coordinate [4Fe-4S] cluster.

Belongs to the Mrp/NBP35 ATP-binding proteins family. NUBP1/NBP35 subfamily. Heterotetramer of 2 Nubp1 and 2 Nubp2 chains. It depends on [4Fe-4S] cluster as a cofactor.

It is found in the cytoplasm. Functionally, component of the cytosolic iron-sulfur (Fe/S) protein assembly (CIA) machinery. Required for maturation of extramitochondrial Fe-S proteins. The Nubp1-Nubp2 heterotetramer forms a Fe-S scaffold complex, mediating the de novo assembly of an Fe-S cluster and its transfer to target apoproteins. The protein is Cytosolic Fe-S cluster assembly factor Nubp1 homolog of Drosophila ananassae (Fruit fly).